A 299-amino-acid chain; its full sequence is ATP phosphoribosyltransferase (299 aa).

This sequence belongs to the ATP phosphoribosyltransferase family. Long subfamily. Equilibrium between an active dimeric form, an inactive hexameric form and higher aggregates. Interconversion between the various forms is largely reversible and is influenced by the natural substrates and inhibitors of the enzyme. The cofactor is Mg(2+).

Its subcellular location is the cytoplasm. It catalyses the reaction 1-(5-phospho-beta-D-ribosyl)-ATP + diphosphate = 5-phospho-alpha-D-ribose 1-diphosphate + ATP. It participates in amino-acid biosynthesis; L-histidine biosynthesis; L-histidine from 5-phospho-alpha-D-ribose 1-diphosphate: step 1/9. Its activity is regulated as follows. Feedback inhibited by histidine. Its function is as follows. Catalyzes the condensation of ATP and 5-phosphoribose 1-diphosphate to form N'-(5'-phosphoribosyl)-ATP (PR-ATP). Has a crucial role in the pathway because the rate of histidine biosynthesis seems to be controlled primarily by regulation of HisG enzymatic activity. The polypeptide is ATP phosphoribosyltransferase (Salmonella dublin (strain CT_02021853)).